The following is a 470-amino-acid chain: Siroheme synthase 2 (470 aa).

The precorrin-2 dehydrogenase /sirohydrochlorin ferrochelatase stretch occupies residues 1-202 (MDYLPMFAKL…EDWQGAEQWL (202 aa)). Residues 22–23 (EV) and 43–44 (PE) each bind NAD(+). Position 126 is a phosphoserine (S126). Residues 214–470 (GEVVLVGAGP…TCDLKLVSLA (257 aa)) are uroporphyrinogen-III C-methyltransferase. P223 contributes to the S-adenosyl-L-methionine binding site. D246 acts as the Proton acceptor in catalysis. The Proton donor role is filled by K268. Residues 299-301 (GGD), 329-330 (TA), M381, and G410 contribute to the S-adenosyl-L-methionine site.

This sequence in the N-terminal section; belongs to the precorrin-2 dehydrogenase / sirohydrochlorin ferrochelatase family. It in the C-terminal section; belongs to the precorrin methyltransferase family.

The catalysed reaction is uroporphyrinogen III + 2 S-adenosyl-L-methionine = precorrin-2 + 2 S-adenosyl-L-homocysteine + H(+). It catalyses the reaction precorrin-2 + NAD(+) = sirohydrochlorin + NADH + 2 H(+). The enzyme catalyses siroheme + 2 H(+) = sirohydrochlorin + Fe(2+). It functions in the pathway cofactor biosynthesis; adenosylcobalamin biosynthesis; precorrin-2 from uroporphyrinogen III: step 1/1. Its pathway is cofactor biosynthesis; adenosylcobalamin biosynthesis; sirohydrochlorin from precorrin-2: step 1/1. The protein operates within porphyrin-containing compound metabolism; siroheme biosynthesis; precorrin-2 from uroporphyrinogen III: step 1/1. It participates in porphyrin-containing compound metabolism; siroheme biosynthesis; siroheme from sirohydrochlorin: step 1/1. It functions in the pathway porphyrin-containing compound metabolism; siroheme biosynthesis; sirohydrochlorin from precorrin-2: step 1/1. In terms of biological role, multifunctional enzyme that catalyzes the SAM-dependent methylations of uroporphyrinogen III at position C-2 and C-7 to form precorrin-2 via precorrin-1. Then it catalyzes the NAD-dependent ring dehydrogenation of precorrin-2 to yield sirohydrochlorin. Finally, it catalyzes the ferrochelation of sirohydrochlorin to yield siroheme. This is Siroheme synthase 2 from Aeromonas hydrophila subsp. hydrophila (strain ATCC 7966 / DSM 30187 / BCRC 13018 / CCUG 14551 / JCM 1027 / KCTC 2358 / NCIMB 9240 / NCTC 8049).